The following is a 479-amino-acid chain: Glutamyl-tRNA(Gln) amidotransferase subunit A (479 aa).

Active-site charge relay system residues include lysine 74 and serine 149. The active-site Acyl-ester intermediate is serine 173.

Belongs to the amidase family. GatA subfamily. In terms of assembly, heterotrimer of A, B and C subunits.

It catalyses the reaction L-glutamyl-tRNA(Gln) + L-glutamine + ATP + H2O = L-glutaminyl-tRNA(Gln) + L-glutamate + ADP + phosphate + H(+). Allows the formation of correctly charged Gln-tRNA(Gln) through the transamidation of misacylated Glu-tRNA(Gln) in organisms which lack glutaminyl-tRNA synthetase. The reaction takes place in the presence of glutamine and ATP through an activated gamma-phospho-Glu-tRNA(Gln). The protein is Glutamyl-tRNA(Gln) amidotransferase subunit A of Cenarchaeum symbiosum (strain A).